The primary structure comprises 148 residues: Transcriptional regulator MraZ (148 aa).

2 consecutive SpoVT-AbrB domains span residues 5 to 53 (ETAI…AESE) and 82 to 125 (AAHL…SEQA).

The protein belongs to the MraZ family. As to quaternary structure, forms oligomers.

It localises to the cytoplasm. The protein localises to the nucleoid. This is Transcriptional regulator MraZ from Stenotrophomonas maltophilia (strain R551-3).